The sequence spans 123 residues: MERIERISEEIKREISDIIQNELKDPRLSKLISITEVNVTKDLRYAKVYVSVMGSEEEKANSLEGLKSAAGFIRREIGRRVQLRYTPEIHFELDNSIERGAYITKLINETSAQNKGSKDPEDT.

This sequence belongs to the RbfA family. In terms of assembly, monomer. Binds 30S ribosomal subunits, but not 50S ribosomal subunits or 70S ribosomes.

Its subcellular location is the cytoplasm. In terms of biological role, one of several proteins that assist in the late maturation steps of the functional core of the 30S ribosomal subunit. Associates with free 30S ribosomal subunits (but not with 30S subunits that are part of 70S ribosomes or polysomes). Required for efficient processing of 16S rRNA. May interact with the 5'-terminal helix region of 16S rRNA. This is Ribosome-binding factor A from Acetivibrio thermocellus (strain ATCC 27405 / DSM 1237 / JCM 9322 / NBRC 103400 / NCIMB 10682 / NRRL B-4536 / VPI 7372) (Clostridium thermocellum).